The chain runs to 201 residues: 3-isopropylmalate dehydratase small subunit (201 aa).

This sequence belongs to the LeuD family. LeuD type 1 subfamily. In terms of assembly, heterodimer of LeuC and LeuD.

It catalyses the reaction (2R,3S)-3-isopropylmalate = (2S)-2-isopropylmalate. It functions in the pathway amino-acid biosynthesis; L-leucine biosynthesis; L-leucine from 3-methyl-2-oxobutanoate: step 2/4. Functionally, catalyzes the isomerization between 2-isopropylmalate and 3-isopropylmalate, via the formation of 2-isopropylmaleate. The protein is 3-isopropylmalate dehydratase small subunit of Salmonella arizonae (strain ATCC BAA-731 / CDC346-86 / RSK2980).